Consider the following 171-residue polypeptide: Transcriptional repressor NrdR (171 aa).

A zinc finger spans residues cysteine 3–cysteine 34. Residues proline 49–glutamate 139 form the ATP-cone domain. The segment at lysine 148–serine 171 is disordered.

The protein belongs to the NrdR family. It depends on Zn(2+) as a cofactor.

In terms of biological role, negatively regulates transcription of bacterial ribonucleotide reductase nrd genes and operons by binding to NrdR-boxes. The protein is Transcriptional repressor NrdR of Aromatoleum aromaticum (strain DSM 19018 / LMG 30748 / EbN1) (Azoarcus sp. (strain EbN1)).